The following is a 359-amino-acid chain: Protein RecA (359 aa).

G74–T81 is a binding site for ATP.

The protein belongs to the RecA family.

It is found in the cytoplasm. Functionally, can catalyze the hydrolysis of ATP in the presence of single-stranded DNA, the ATP-dependent uptake of single-stranded DNA by duplex DNA, and the ATP-dependent hybridization of homologous single-stranded DNAs. It interacts with LexA causing its activation and leading to its autocatalytic cleavage. This chain is Protein RecA, found in Anaplasma marginale (strain Florida).